A 417-amino-acid chain; its full sequence is Xylulose 5-phosphate/phosphate translocator, chloroplastic (417 aa).

A chloroplast-targeting transit peptide spans methionine 1–alanine 82. Positions threonine 66–lysine 102 are disordered. An N-acetylalanine modification is found at alanine 83. Residues proline 91 to lysine 102 are compositionally biased toward basic and acidic residues. The next 9 membrane-spanning stretches (helical) occupy residues threonine 109–phenylalanine 129, tryptophan 141–phenylalanine 161, phenylalanine 173–valine 193, valine 198–serine 218, tyrosine 225–valine 245, glutamate 247–leucine 267, leucine 287–glutamate 307, alanine 318–phenylalanine 338, and leucine 384–alanine 404. Positions asparagine 127 to alanine 243 constitute an EamA domain.

Belongs to the TPT transporter family. TPT (TC 2.A.7.9) subfamily. As to expression, widely expressed.

Its subcellular location is the plastid. It is found in the chloroplast membrane. Sugar phosphate/phosphate translocator that transports inorganic phosphate, triose phosphate, 3-phosphoglycerate, xylulose 5-phosphate (Xul-5-P) and to a lesser extent ribulose 5-phosphate. Does not transport ribose 5-phosphate or hexose phosphates. Provides cytosolic Xul-5-P to the chloroplast, where it is used as an intermediate in the plastidic pentose phosphate pathways. The chain is Xylulose 5-phosphate/phosphate translocator, chloroplastic (XPT) from Arabidopsis thaliana (Mouse-ear cress).